A 403-amino-acid chain; its full sequence is Phosphopentomutase (403 aa).

Residues Asp-13, Asp-298, His-303, Asp-339, His-340, and His-351 each coordinate Mn(2+).

The protein belongs to the phosphopentomutase family. Mn(2+) is required as a cofactor.

The protein localises to the cytoplasm. It carries out the reaction 2-deoxy-alpha-D-ribose 1-phosphate = 2-deoxy-D-ribose 5-phosphate. The enzyme catalyses alpha-D-ribose 1-phosphate = D-ribose 5-phosphate. It participates in carbohydrate degradation; 2-deoxy-D-ribose 1-phosphate degradation; D-glyceraldehyde 3-phosphate and acetaldehyde from 2-deoxy-alpha-D-ribose 1-phosphate: step 1/2. Its function is as follows. Isomerase that catalyzes the conversion of deoxy-ribose 1-phosphate (dRib-1-P) and ribose 1-phosphate (Rib-1-P) to deoxy-ribose 5-phosphate (dRib-5-P) and ribose 5-phosphate (Rib-5-P), respectively. The polypeptide is Phosphopentomutase (Streptococcus gordonii (strain Challis / ATCC 35105 / BCRC 15272 / CH1 / DL1 / V288)).